A 122-amino-acid polypeptide reads, in one-letter code: MARIAGVNIPTAKRVPIALTYVTGIGHTSAAAICEAVGIDVTRRVNELSDAEVLAIREHIDANYAVEGDLRRETQMNIKRLMDLGCYRGLRHRRNLPVRGQRTHTNARTRKGPAKAIAGKKK.

Residues 98–122 (VRGQRTHTNARTRKGPAKAIAGKKK) form a disordered region.

The protein belongs to the universal ribosomal protein uS13 family. Part of the 30S ribosomal subunit. Forms a loose heterodimer with protein S19. Forms two bridges to the 50S subunit in the 70S ribosome.

Its function is as follows. Located at the top of the head of the 30S subunit, it contacts several helices of the 16S rRNA. In the 70S ribosome it contacts the 23S rRNA (bridge B1a) and protein L5 of the 50S subunit (bridge B1b), connecting the 2 subunits; these bridges are implicated in subunit movement. Contacts the tRNAs in the A and P-sites. The chain is Small ribosomal subunit protein uS13 from Jannaschia sp. (strain CCS1).